The sequence spans 208 residues: FMN-dependent NADH:quinone oxidoreductase 1 (208 aa).

It belongs to the azoreductase type 1 family. As to quaternary structure, homodimer. The cofactor is FMN.

It catalyses the reaction 2 a quinone + NADH + H(+) = 2 a 1,4-benzosemiquinone + NAD(+). It carries out the reaction N,N-dimethyl-1,4-phenylenediamine + anthranilate + 2 NAD(+) = 2-(4-dimethylaminophenyl)diazenylbenzoate + 2 NADH + 2 H(+). Functionally, quinone reductase that provides resistance to thiol-specific stress caused by electrophilic quinones. Its function is as follows. Also exhibits azoreductase activity. Catalyzes the reductive cleavage of the azo bond in aromatic azo compounds to the corresponding amines. This Bacillus thuringiensis subsp. konkukian (strain 97-27) protein is FMN-dependent NADH:quinone oxidoreductase 1.